The sequence spans 513 residues: Alpha-amylase mde5 (513 aa).

A signal peptide spans 1–25; that stretch reads MKHNEVFGWTLKVLSFLLVVIPANA. The cysteines at positions 52 and 60 are disulfide-linked. Tryptophan 105 lines the substrate pocket. Asparagine 143 provides a ligand contact to Ca(2+). Residue histidine 144 participates in substrate binding. Asparagine 162 carries N-linked (GlcNAc...) asparagine glycosylation. Residues cysteine 171 and cysteine 184 are joined by a disulfide bond. Residues glutamate 182 and aspartate 195 each contribute to the Ca(2+) site. Arginine 224 is a substrate binding site. 3 residues coordinate Ca(2+): aspartate 226, histidine 230, and glutamate 250. The active-site Nucleophile is the aspartate 226. A substrate-binding site is contributed by 229–230; the sequence is KH. Residue glutamate 250 is the Proton donor of the active site. Glycine 254 provides a ligand contact to substrate. Cysteine 260 and cysteine 304 are disulfide-bonded. Aspartate 318 lines the substrate pocket. N-linked (GlcNAc...) asparagine glycosylation occurs at asparagine 357. Arginine 365 lines the substrate pocket. The cysteines at positions 454 and 488 are disulfide-linked.

It belongs to the glycosyl hydrolase 13 family. Ca(2+) is required as a cofactor.

It is found in the endoplasmic reticulum. The catalysed reaction is Endohydrolysis of (1-&gt;4)-alpha-D-glucosidic linkages in polysaccharides containing three or more (1-&gt;4)-alpha-linked D-glucose units.. This Schizosaccharomyces pombe (strain 972 / ATCC 24843) (Fission yeast) protein is Alpha-amylase mde5 (mde5).